The chain runs to 355 residues: UDP-N-acetylglucosamine--N-acetylmuramyl-(pentapeptide) pyrophosphoryl-undecaprenol N-acetylglucosamine transferase (355 aa).

UDP-N-acetyl-alpha-D-glucosamine is bound by residues 15 to 17 (TGG), Asn127, Arg163, Ser191, Ile244, 263 to 268 (ALTVSE), and Gln288.

The protein belongs to the glycosyltransferase 28 family. MurG subfamily.

The protein localises to the cell inner membrane. The enzyme catalyses di-trans,octa-cis-undecaprenyl diphospho-N-acetyl-alpha-D-muramoyl-L-alanyl-D-glutamyl-meso-2,6-diaminopimeloyl-D-alanyl-D-alanine + UDP-N-acetyl-alpha-D-glucosamine = di-trans,octa-cis-undecaprenyl diphospho-[N-acetyl-alpha-D-glucosaminyl-(1-&gt;4)]-N-acetyl-alpha-D-muramoyl-L-alanyl-D-glutamyl-meso-2,6-diaminopimeloyl-D-alanyl-D-alanine + UDP + H(+). It participates in cell wall biogenesis; peptidoglycan biosynthesis. Functionally, cell wall formation. Catalyzes the transfer of a GlcNAc subunit on undecaprenyl-pyrophosphoryl-MurNAc-pentapeptide (lipid intermediate I) to form undecaprenyl-pyrophosphoryl-MurNAc-(pentapeptide)GlcNAc (lipid intermediate II). The sequence is that of UDP-N-acetylglucosamine--N-acetylmuramyl-(pentapeptide) pyrophosphoryl-undecaprenol N-acetylglucosamine transferase from Salmonella enteritidis PT4 (strain P125109).